Here is a 620-residue protein sequence, read N- to C-terminus: Protein AFR1 (620 aa).

Residues 1-12 (MEGSYLSAQENQ) show a composition bias toward polar residues. Residues 1–20 (MEGSYLSAQENQPIPERLIP) are disordered. Phosphoserine is present on residues S472 and S526.

To yeast YER158C.

Acts in conjunction with the alpha-factor receptor to promote morphogenesis and adaptation. This is Protein AFR1 (AFR1) from Saccharomyces cerevisiae (strain ATCC 204508 / S288c) (Baker's yeast).